The sequence spans 1206 residues: Translocase of chloroplast 132, chloroplastic (1206 aa).

Gly2 carries the post-translational modification N-acetylglycine. The stretch at 13 to 33 (REDKKLAEDRISDEQVVKNEL) forms a coiled coil. Disordered regions lie at residues 33-75 (LVRS…SDDL) and 97-119 (VGDL…VGES). Residues 39-49 (VRDDNEDEVFE) show a composition bias toward acidic residues. Phosphoserine is present on Ser195. The disordered stretch occupies residues 233-499 (QTEQEVEEGE…TTTEADEHDE (267 aa)). The span at 309–324 (AYTSNIVTNASGDNEV) shows a compositional bias: polar residues. Over residues 325–336 (SSAVTSSPLEES) the composition is skewed to low complexity. Ser337, Ser363, and Ser398 each carry phosphoserine. Polar residues predominate over residues 357 to 379 (LASSPHSYPESTEVHSNSGSPGV). The segment covering 403 to 427 (KELEKQQSSRVHVDPEITENSHVET) has biased composition (basic and acidic residues). The span at 430–440 (EVVSSVSPTES) shows a compositional bias: low complexity. The segment covering 468 to 492 (APQQSRVNGNGSHNQFQQAEDSTTT) has biased composition (polar residues). Residues 572–801 (DFSCTIMVLG…KLQDNIPGRP (230 aa)) form the AIG1-type G domain. The tract at residues 581 to 588 (GKSGVGKS) is G1. GTP contacts are provided by residues 584–589 (GVGKSA) and 603–608 (DAFQMG). Mg(2+) is bound at residue Ser588. The interval 603-606 (DAFQ) is homodimerization. The G2 stretch occupies residues 607-611 (MGTKR). The segment at 628–631 (DTPG) is G3. The tract at residues 666-671 (RLDMQS) is homodimerization. Positions 700–703 (THAA) are G4. GTP-binding positions include His701 and 749 to 750 (EN). The G5 stretch occupies residues 749–751 (ENH). The tract at residues 824–862 (QPKLPEQQYGDEEDEDDLEESSDSDEESEYDQLPPFKSL) is disordered. A compositionally biased stretch (acidic residues) spans 832 to 853 (YGDEEDEDDLEESSDSDEESEY). The helical transmembrane segment at 1182-1199 (LAMVAIVPLFKKLLSYYY) threads the bilayer.

It belongs to the TRAFAC class TrmE-Era-EngA-EngB-Septin-like GTPase superfamily. AIG1/Toc34/Toc159-like paraseptin GTPase family. TOC159 subfamily. As to quaternary structure, homodimer. Part of the TOC core complex that includes 1 protein for the specific recognition of transit peptides surrounded by a ring composed of four proteins forming translocation channels, and four to five GTP-binding proteins providing energy. This core complex can interact with components of the TIC complex to form a larger import complex. Chloroplastic protein precursor such as prSS (precursor of the RuBisCO small subunit) interacts with these complexes. The TOC complex contains a specific subset of polar lipids such as digalactosyldiacylglyceride (DGDG), phosphatidylcholine (PC) and phosphatidylglycerol (PG). Requires Mg(2+) as cofactor. In terms of processing, phosphorylated by KOC1. In terms of tissue distribution, expressed in seedlings, leaves, flowers, and roots.

The protein localises to the plastid. The protein resides in the chloroplast outer membrane. It localises to the cytoplasm. Its function is as follows. GTPase involved in protein precursor import into chloroplasts. Seems to recognize chloroplast-destined precursor proteins and regulate their presentation to the translocation channel through GTP hydrolysis. Probably specialized in the import of nuclear encoded non-photosynthetic preproteins from the cytoplasm to the chloroplast. In Arabidopsis thaliana (Mouse-ear cress), this protein is Translocase of chloroplast 132, chloroplastic.